We begin with the raw amino-acid sequence, 872 residues long: Exoglucanase A (872 aa).

An N-terminal signal peptide occupies residues M1–A40. Residues A41–E477 are catalytic. 2 disulfides stabilise this stretch: C140/C202 and C374/C428. D188 (proton donor) is an active-site residue. The active-site Nucleophile is the D410. Fibronectin type-III domains follow at residues V484–G569, V579–G667, and V677–A765. The CBM2 domain occupies Q763–G872. A disulfide bond links C770 and C869.

It belongs to the glycosyl hydrolase 6 (cellulase B) family.

It catalyses the reaction Hydrolysis of (1-&gt;4)-beta-D-glucosidic linkages in cellulose and cellotetraose, releasing cellobiose from the non-reducing ends of the chains.. Its function is as follows. This enzyme hydrolyzes 1,4-beta-D-glucosidic linkages of cellulose. Weak activity against carboxymethylcellulose, bacterial microcrystalline cellulose and barley beta-glucan. Also has weak endoglucanase activity. Hydrolyzes glucosidic bonds with inversion of anomeric configuration. The sequence is that of Exoglucanase A (cbhA) from Cellulomonas fimi (strain ATCC 484 / DSM 20113 / JCM 1341 / CCUG 24087 / LMG 16345 / NBRC 15513 / NCIMB 8980 / NCTC 7547 / NRS-133).